Reading from the N-terminus, the 192-residue chain is Putative ripening-related protein 2 (192 aa).

An N-terminal signal peptide occupies residues 1–26 (MATTNCLLALAIAGLVLVSLPGLSRG).

The protein belongs to the kiwellin family.

It is found in the secreted. In Oryza sativa subsp. japonica (Rice), this protein is Putative ripening-related protein 2.